The primary structure comprises 538 residues: Phosphatidylethanolamine transferase Mcr-2 (538 aa).

The next 5 helical transmembrane spans lie at 14-34, 47-67, 72-92, 121-141, and 161-181; these read PFVLMGLVALFLAATANLTFF, LGFIISMAVAVMGAMLLIVVL, YVLKPVLILLLIMGAVTSYFT, LAFFVRIIGLGVLPSVLVAVA, and VSLVLLLVPIGLFSSQYASFF. E244 and T283 together coordinate Zn(2+). Cystine bridges form between C279/C289, C354/C362, and C412/C420. T283 bears the Phosphothreonine mark. D463 and H464 together coordinate Zn(2+).

It belongs to the phosphoethanolamine transferase family. As to quaternary structure, monomer. In terms of processing, phosphorylated at Thr-283; may represent an intermediate in the catalytic mechanism.

The protein resides in the cell inner membrane. It catalyses the reaction lipid A (E. coli) + a 1,2-diacyl-sn-glycero-3-phosphoethanolamine + H(+) = lipid A 4'-(2-aminoethyl diphosphate) (E. coli) + a 1,2-diacyl-sn-glycerol. Functionally, probably catalyzes the addition of a phosphoethanolamine moiety to lipid A. Phosphoethanolamine modification of lipid A confers polymyxin resistance. Confers resistance to polymyxin-type antibiotics such as colistin. The polypeptide is Phosphatidylethanolamine transferase Mcr-2 (Escherichia coli).